The sequence spans 316 residues: CXXC-type zinc finger protein 5 (316 aa).

Over residues 1 to 10 the composition is skewed to gly residues; the sequence is MSSLGGGSQD. The tract at residues 1 to 95 is disordered; sequence MSSLGGGSQD…SGGAGSMMGG (95 aa). 2 stretches are compositionally biased toward low complexity: residues 11–27 and 36–50; these read AGGS…SGSG and SATV…VADD. A CXXC-type zinc finger spans residues 250–291; the sequence is GKKKRKRCGMCAPCRRRINCEQCSSCRNRKTGHQICKFRKCE. The Nuclear localization signal motif lies at 251 to 256; sequence KKKRKR. Positions 257, 260, 263, 269, 272, 275, 285, and 290 each coordinate Zn(2+).

Interacts with DVL1. Interacts with RBPJ. As to expression, expressed in neural stem cells (at protein level). Expressed in the dorsal telencephalon.

It is found in the nucleus. Its subcellular location is the cytoplasm. In terms of biological role, may indirectly participate in activation of the NF-kappa-B and MAPK pathways. Required for DNA damage-induced ATM phosphorylation, p53 activation and cell cycle arrest. Involved in myelopoiesis. Acts as a mediator of BMP4-mediated modulation of canonical Wnt signaling activity in neural stem cells. Binds to the oxygen responsive element of COX4I2 and represses its transcription under hypoxia conditions (4% oxygen), as well as normoxia conditions (20% oxygen). May repress COX4I2 transactivation induced by CHCHD2 and RBPJ. Binds preferentially to DNA containing cytidine-phosphate-guanosine (CpG) dinucleotides over CpH (H=A, T, and C), hemimethylated-CpG and hemimethylated-hydroxymethyl-CpG. The protein is CXXC-type zinc finger protein 5 (Cxxc5) of Rattus norvegicus (Rat).